The primary structure comprises 182 residues: MSLNLNDKKAVVAEISAKVASAQTIVVAEYRGIQVGHLTQLRAKARDQGVYLRVLKNTLARRAVEGTAFASLASEMTGPLIYSISDDAVAAAKVISDFSKTNDKLVVKAGNYAGKPLDKAAVTALANIPSREVLLAQVLGMMLVPVASFTRGLAALAAKKAEGAEPVAAAAPAAESTEAAAE.

Belongs to the universal ribosomal protein uL10 family. In terms of assembly, part of the ribosomal stalk of the 50S ribosomal subunit. The N-terminus interacts with L11 and the large rRNA to form the base of the stalk. The C-terminus forms an elongated spine to which L12 dimers bind in a sequential fashion forming a multimeric L10(L12)X complex.

In terms of biological role, forms part of the ribosomal stalk, playing a central role in the interaction of the ribosome with GTP-bound translation factors. In Janthinobacterium sp. (strain Marseille) (Minibacterium massiliensis), this protein is Large ribosomal subunit protein uL10.